Consider the following 881-residue polypeptide: Serine/threonine-protein phosphatase BSL1 (881 aa).

Kelch repeat units lie at residues 60-109 (GSSS…AVGT), 269-320 (RLHV…DQDP), and 338-385 (RIYV…PRFS). Disordered regions lie at residues 368–407 (SPLLASDRTQQSSTPRFSYAARPPSGSEPSFSMSEGLSLD) and 436–464 (AGTLDEEPSTSDASSPIVESTTDGTANEG). Composition is skewed to polar residues over residues 374-383 (DRTQQSSTPR) and 445-460 (TSDASSPIVESTTDGT). Phosphoserine is present on Ser491. A disordered region spans residues 503-522 (VPMNNSDVPQPTKKFTRQKS). Mn(2+)-binding residues include Asp584, His586, Asp618, and Asn650. His651 (proton donor) is an active-site residue. His703 and His782 together coordinate Mn(2+). The disordered stretch occupies residues 837–881 (ILSPENSPEHSGDDAWMQELNIQRPPTPTRGRPQPDFDRSSLAYI). Ser839 is subject to Phosphoserine.

The protein belongs to the PPP phosphatase family. BSU subfamily. Interacts with CDG1 and CDL1. The cofactor is Mn(2+). Expressed in mature cauline leaves and at the tip of influorescence, including flowers. Expressed at lower level in young tissues relative to older ones.

Its subcellular location is the nucleus. It carries out the reaction O-phospho-L-seryl-[protein] + H2O = L-seryl-[protein] + phosphate. It catalyses the reaction O-phospho-L-threonyl-[protein] + H2O = L-threonyl-[protein] + phosphate. In terms of biological role, phosphatase involved in elongation process, probably by acting as a regulator of brassinolide signaling. The protein is Serine/threonine-protein phosphatase BSL1 (BSL1) of Arabidopsis thaliana (Mouse-ear cress).